The following is a 335-amino-acid chain: Ferrochelatase (335 aa).

The Fe cation site is built by H211 and E290.

It belongs to the ferrochelatase family.

The protein localises to the cytoplasm. It carries out the reaction heme b + 2 H(+) = protoporphyrin IX + Fe(2+). It participates in porphyrin-containing compound metabolism; protoheme biosynthesis; protoheme from protoporphyrin-IX: step 1/1. Its function is as follows. Catalyzes the ferrous insertion into protoporphyrin IX. The protein is Ferrochelatase of Sulfurihydrogenibium sp. (strain YO3AOP1).